The chain runs to 423 residues: Histidine--tRNA ligase (423 aa).

The protein belongs to the class-II aminoacyl-tRNA synthetase family. As to quaternary structure, homodimer.

Its subcellular location is the cytoplasm. It carries out the reaction tRNA(His) + L-histidine + ATP = L-histidyl-tRNA(His) + AMP + diphosphate + H(+). This Moorella thermoacetica (strain ATCC 39073 / JCM 9320) protein is Histidine--tRNA ligase.